Consider the following 473-residue polypeptide: Cysteine--tRNA ligase (473 aa).

Position 28 (Cys28) interacts with Zn(2+). The short motif at 30–40 (MTVYDYCHLGH) is the 'HIGH' region element. 3 residues coordinate Zn(2+): Cys209, His234, and Glu238. The short motif at 282–286 (KMSKS) is the 'KMSKS' region element. An ATP-binding site is contributed by Lys285.

It belongs to the class-I aminoacyl-tRNA synthetase family. Monomer. Requires Zn(2+) as cofactor.

Its subcellular location is the cytoplasm. It catalyses the reaction tRNA(Cys) + L-cysteine + ATP = L-cysteinyl-tRNA(Cys) + AMP + diphosphate. The chain is Cysteine--tRNA ligase from Neisseria gonorrhoeae (strain ATCC 700825 / FA 1090).